The sequence spans 884 residues: Kinesin-like protein KIN-7C (884 aa).

One can recognise a Kinesin motor domain in the interval 33-355; that stretch reads RIQVLVRLRP…LLFGSCAKEV (323 aa). 119–126 contributes to the ATP binding site; sequence GQTSSGKT. The stretch at 364-435 forms a coiled coil; sequence VMSDKALVKH…LQDLLQSVGD (72 aa). Positions 434-530 are disordered; the sequence is GDHDLNRQVQ…VNSRHSRPSG (97 aa). Low complexity predominate over residues 449–460; it reads RSPPSVGMPPSV. A compositionally biased stretch (basic and acidic residues) spans 461-483; that stretch reads SRDDSSQVSHDDSDLYKEVRCIE. A compositionally biased stretch (polar residues) spans 498 to 523; that stretch reads GESSSPQDSNMNSGLHGNDSNASVNS.

Belongs to the TRAFAC class myosin-kinesin ATPase superfamily. Kinesin family. KIN-7 subfamily.

The chain is Kinesin-like protein KIN-7C from Oryza sativa subsp. japonica (Rice).